Here is a 274-residue protein sequence, read N- to C-terminus: Putative phosphoenolpyruvate synthase regulatory protein (274 aa).

Residue 157–164 (GVSRCGKT) participates in ADP binding.

It belongs to the pyruvate, phosphate/water dikinase regulatory protein family. PSRP subfamily.

It catalyses the reaction [pyruvate, water dikinase] + ADP = [pyruvate, water dikinase]-phosphate + AMP + H(+). The catalysed reaction is [pyruvate, water dikinase]-phosphate + phosphate + H(+) = [pyruvate, water dikinase] + diphosphate. Functionally, bifunctional serine/threonine kinase and phosphorylase involved in the regulation of the phosphoenolpyruvate synthase (PEPS) by catalyzing its phosphorylation/dephosphorylation. This chain is Putative phosphoenolpyruvate synthase regulatory protein, found in Bordetella avium (strain 197N).